A 179-amino-acid chain; its full sequence is tRNA (cytidine(56)-2'-O)-methyltransferase (179 aa).

S-adenosyl-L-methionine-binding positions include Leu-82, 112–116 (GAEKV), and 130–137 (VGNQPHSE).

The protein belongs to the aTrm56 family. As to quaternary structure, homodimer.

It is found in the cytoplasm. It carries out the reaction cytidine(56) in tRNA + S-adenosyl-L-methionine = 2'-O-methylcytidine(56) in tRNA + S-adenosyl-L-homocysteine + H(+). Its function is as follows. Specifically catalyzes the AdoMet-dependent 2'-O-ribose methylation of cytidine at position 56 in tRNAs. The protein is tRNA (cytidine(56)-2'-O)-methyltransferase of Methanococcus maripaludis (strain C6 / ATCC BAA-1332).